A 136-amino-acid polypeptide reads, in one-letter code: Nucleoside diphosphate kinase (136 aa).

The ATP site is built by K10, F58, R86, T92, R104, and N114. The active-site Pros-phosphohistidine intermediate is H117.

Belongs to the NDK family. Homotetramer. Mg(2+) serves as cofactor.

The protein resides in the cytoplasm. It catalyses the reaction a 2'-deoxyribonucleoside 5'-diphosphate + ATP = a 2'-deoxyribonucleoside 5'-triphosphate + ADP. The catalysed reaction is a ribonucleoside 5'-diphosphate + ATP = a ribonucleoside 5'-triphosphate + ADP. Its function is as follows. Major role in the synthesis of nucleoside triphosphates other than ATP. The ATP gamma phosphate is transferred to the NDP beta phosphate via a ping-pong mechanism, using a phosphorylated active-site intermediate. The chain is Nucleoside diphosphate kinase from Mycobacterium avium (strain 104).